A 64-amino-acid polypeptide reads, in one-letter code: Metallothionein-like protein 1 (64 aa).

Belongs to the metallothionein superfamily. Type 15 family.

In terms of biological role, metallothioneins have a high content of cysteine residues that bind various heavy metals. This is Metallothionein-like protein 1 (MT1) from Prunus avium (Cherry).